Consider the following 417-residue polypeptide: Exodeoxyribonuclease 7 large subunit (417 aa).

It belongs to the XseA family. In terms of assembly, heterooligomer composed of large and small subunits.

The protein resides in the cytoplasm. The catalysed reaction is Exonucleolytic cleavage in either 5'- to 3'- or 3'- to 5'-direction to yield nucleoside 5'-phosphates.. Functionally, bidirectionally degrades single-stranded DNA into large acid-insoluble oligonucleotides, which are then degraded further into small acid-soluble oligonucleotides. This chain is Exodeoxyribonuclease 7 large subunit, found in Lactococcus lactis subsp. cremoris (strain MG1363).